Here is a 415-residue protein sequence, read N- to C-terminus: Sphingomyelin synthase-related protein 1 (415 aa).

In terms of domain architecture, SAM spans 12–78 (WTTKHVAVWL…MLSVRKLQKI (67 aa)). 4 helical membrane passes run 153–173 (ILSC…MVIV), 201–221 (FAMT…VLLL), 232–252 (LCSL…VTSL), and 277–297 (FAIW…GDYM). Residue His301 is part of the active site. A helical transmembrane segment spans residues 322-342 (FLHTLSWVLNLFGIFFILAAH). Catalysis depends on residues His344 and Asp348. A helical membrane pass occupies residues 347 to 367 (IDVFIAFYITTRLFLYYHTLA). The Cytoplasmic segment spans residues 368 to 415 (NTRAYQQSRRARIWFPMFSFFECNVNGTVPNEYCWPFSKPAIMKRLIG).

Belongs to the sphingomyelin synthase family.

Its subcellular location is the endoplasmic reticulum membrane. It carries out the reaction an N-acylsphing-4-enine + a 1,2-diacyl-sn-glycero-3-phosphoethanolamine = an N-acylsphing-4-enine 1-phosphoethanolamine + a 1,2-diacyl-sn-glycerol. The catalysed reaction is an N-acylsphinganine + a 1,2-diacyl-sn-glycero-3-phosphoethanolamine = an N-acylsphinganine-1-phosphoethanolamine + a 1,2-diacyl-sn-glycerol. The enzyme catalyses an N-acyl-(4R)-4-hydroxysphinganine + a 1,2-diacyl-sn-glycero-3-phosphoethanolamine = an N-acyl-(4R)-4-hydroxysphinganine-1-phosphoethanolamine + a 1,2-diacyl-sn-glycerol. It catalyses the reaction N-hexadecanoylsphinganine + a 1,2-diacyl-sn-glycero-3-phosphoethanolamine = N-hexadecanoyl-sphinganine-1-phosphoethanolamine + a 1,2-diacyl-sn-glycerol. It carries out the reaction N-hexadecanoyl-(4R)-hydroxysphinganine + a 1,2-diacyl-sn-glycero-3-phosphoethanolamine = N-hexadecanoyl-(4R)-hydroxysphinganine-1-phosphoethanolamine + a 1,2-diacyl-sn-glycerol. It participates in sphingolipid metabolism. In terms of biological role, synthesizes sphingolipids through transfer of a phosphatidyl head group from a glycerophospholipid on to the primary hydroxyl of a ceramide in the lumen of the endoplasmic reticulum. Catalyzes the synthesis of ceramide phosphoethanolamines (CPEs) (such as N-acylsphing-4-enine 1-phosphoethanolamine) by transferring phosphoethanolamine head group, which is smaller and more hydrophilic than the phosphocholine (PC) headgroup transferred in the canonical sphingomyelin synthesis (SMS) reaction by SMS1 or SMS2, from a phosphatidylethanolamine (1,2-diacyl-sn-glycero-3-phosphoethanolamine, PE) to a ceramide (such as N-acylsphing-4-enine). The larger PC prevents an efficient fit in the enzyme's catalytic pocket, leading to little or no SMS activity. In vitro, in the absence of ceramide, it has PLC activity with preference for phosphatidylinositol and phosphatidic acid, but also hydrolyzes phosphatidylethanolamine. This Homo sapiens (Human) protein is Sphingomyelin synthase-related protein 1.